A 218-amino-acid polypeptide reads, in one-letter code: MSIGILGKKLGMSQFFDEEGKAVPVTLIEAGPCRITQLKSIDTDGYTAVQLGYGETRQKLVNKPSKGHLARSGEQLLSHLREYRVETIDGLKLGNSITVEDFKAGQKVDVSGDSMGRGFSGYQKRHGFSRGPMTHGSKNHREPGSTGAGTTPGRIYPGKRMAGRYGGKQITTRGLVIVKVDTGHNLLVVKGSVPGKPGSLLNIFPAKGVNSKFANGGK.

Residues 127–161 (GFSRGPMTHGSKNHREPGSTGAGTTPGRIYPGKRM) form a disordered region.

This sequence belongs to the universal ribosomal protein uL3 family. Part of the 50S ribosomal subunit.

The protein resides in the plastid. It localises to the organellar chromatophore. In terms of biological role, one of the primary rRNA binding proteins, it binds directly near the 3'-end of the 23S rRNA, where it nucleates assembly of the 50S subunit. The sequence is that of Large ribosomal subunit protein uL3c (rpl3) from Paulinella chromatophora.